The chain runs to 273 residues: Nitrogenase iron protein (273 aa).

8 to 15 (GKGGIGKS) is an ATP binding site. Residue C95 participates in [4Fe-4S] cluster binding. R98 bears the ADP-ribosylarginine; by dinitrogenase reductase ADP-ribosyltransferase mark. A [4Fe-4S] cluster-binding site is contributed by C130.

Belongs to the NifH/BchL/ChlL family. In terms of assembly, homodimer. It depends on [4Fe-4S] cluster as a cofactor. Post-translationally, the reversible ADP-ribosylation of Arg-98 inactivates the nitrogenase reductase and regulates nitrogenase activity.

The catalysed reaction is N2 + 8 reduced [2Fe-2S]-[ferredoxin] + 16 ATP + 16 H2O = H2 + 8 oxidized [2Fe-2S]-[ferredoxin] + 2 NH4(+) + 16 ADP + 16 phosphate + 6 H(+). Its function is as follows. The key enzymatic reactions in nitrogen fixation are catalyzed by the nitrogenase complex, which has 2 components: the iron protein and the molybdenum-iron protein. This is Nitrogenase iron protein from Roseiflexus castenholzii (strain DSM 13941 / HLO8).